The following is a 336-amino-acid chain: Calcium uniporter regulatory subunit MCUb, mitochondrial (336 aa).

A mitochondrion-targeting transit peptide spans 1 to 35 (MLQRGLWPWRTRLLPTPGTWRPARPWPLPPPPQVL). Residues 179 to 210 (ESQKKREHHLLEKIDHLKEQLQPLEQVKAGIE) are a coiled coil. 2 helical membrane-spanning segments follow: residues 220-240 (LLWAGLALLSIQGGALAWLTW) and 250-270 (PVTYFITFANSMVFFAYFIVT). The stretch at 297-323 (FDVQQYNKLKEDLAKAKESLKQARHSL) forms a coiled coil.

The protein belongs to the MCU (TC 1.A.77) family. As to quaternary structure, homooligomer. Associates with the uniplex complex, composed of MCU, MICU1, MICU2 and EMRE/SMDT1, inhibiting its activity.

It is found in the mitochondrion inner membrane. Its function is as follows. Negative regulator of the mitochondrial calcium uniporter (MCU), a channel that mediates calcium uptake into the mitochondrial matrix. MCUB is required to limit mitochondrial calcium overload during stress. Acts as a dominant-negative regulator that displaces MCU from the functional uniplex complex and thereby decreases the association of calcium sensors MICU1 and MICU2, preventing channel gating. Mitochondrial calcium homeostasis plays key roles in mitochondrial metabolism. Acts as an important regulator of mitochondrial metabolism in response to stress in muscle cells: induced in response to fasting, leading to restrict mitochondrial calcium uptake, resulting in reprogramming of mitochondria toward fatty acid oxidation preference. Acts as a regulator of macrophage polarization during skeletal muscle regeneration: inhibition of mitochondrial calcium uptake drives differentiation of macrophages with anti-inflammatory profile, promoting the differentiation and fusion of satellite cells. The polypeptide is Calcium uniporter regulatory subunit MCUb, mitochondrial (Homo sapiens (Human)).